Consider the following 432-residue polypeptide: FAD-dependent monooxygenase pynG (432 aa).

FAD contacts are provided by glutamate 32, arginine 103, aspartate 315, and alanine 328.

The protein belongs to the paxM FAD-dependent monooxygenase family. Requires FAD as cofactor.

It functions in the pathway secondary metabolite biosynthesis. Its function is as follows. FAD-dependent monooxygenase; part of the gene cluster that mediates the biosynthesis of pyranonigrins, a family of antioxidative compounds. The first step of pyranonigrins biosynthesis is performed by the hybrid PKS-NRPS synthetase that condenses 6 malonyl-CoA units to an acetyl starter unit, to form a 1,3,5-trioxotetradecane-6,8-dienyl-ACP. The enoyl reductase (ER) domain of pynA is likely to be functional during the first two rounds of polyketide chain extension, to generate the saturated C-C bonds of the alkyl side chain. PynA subsequently forms the amide bond between the acyl chain and L-serine. Although pynA has a terminal reductase domain, it appears to require the thioesterase pynI for the release of the straight-chain intermediate from pynA via the formation of a tetramic acid pyranonigrin J. The methyltransferase pynC then coverts pyranonigrin J to pyranonigrin I via N-methylation. The FAD-dependent monooxygenase pynG catalyzes an epoxidation-mediated cyclization to form the dihydro-gamma-pyrone moiety, followed by pynD-catalyzed oxidation of the alcohol to the ketone and enolization to yield the characteristic tetramic acid-fused gamma-pyrone core of pyranonigrin H. Pyranonigrin H is substrate of pynH for dehydration-mediated exo-methylene formation from the serine side chain to produce pyranonigrin E, before the oxidase pynE reduces the exo-methylene of pyranonigrin E into a pendant methyl to form pyranonigrin G. The FAD-linked oxidoreductase pynB performs the reverse reaction and converts pyranonigrin G back to pyranonigrin E. This chain is FAD-dependent monooxygenase pynG, found in Aspergillus niger (strain ATCC MYA-4892 / CBS 513.88 / FGSC A1513).